Reading from the N-terminus, the 207-residue chain is MATVDGTTAPSSGGKTATVALESGGGRYGGPAPAKCSGANLALRALLFAVSLSALVVLVTAKQTVMVPFVIRPPQFILAPVPAKYTHSPALIYLLAALCATCFYSLITAISSVRLLSSSACSAKTLFYLILLDVFYAAVMASATGTAGAVAWVGLKGNSHTRWNKICNVYGKFCRHIGSSTFLALIAAIVLVLLAFLNAYSLYRRSR.

Residues 1-40 (MATVDGTTAPSSGGKTATVALESGGGRYGGPAPAKCSGAN) are Cytoplasmic-facing. The helical transmembrane segment at 41 to 61 (LALRALLFAVSLSALVVLVTA) threads the bilayer. Residues 62–89 (KQTVMVPFVIRPPQFILAPVPAKYTHSP) are Extracellular-facing. The chain crosses the membrane as a helical span at residues 90–110 (ALIYLLAALCATCFYSLITAI). Over 111 to 124 (SSVRLLSSSACSAK) the chain is Cytoplasmic. A helical membrane pass occupies residues 125-145 (TLFYLILLDVFYAAVMASATG). At 146–176 (TAGAVAWVGLKGNSHTRWNKICNVYGKFCRH) the chain is on the extracellular side. A helical transmembrane segment spans residues 177–197 (IGSSTFLALIAAIVLVLLAFL). Over 198 to 207 (NAYSLYRRSR) the chain is Cytoplasmic.

It belongs to the Casparian strip membrane proteins (CASP) family. As to quaternary structure, homodimer and heterodimers.

The protein resides in the cell membrane. This Oryza sativa subsp. japonica (Rice) protein is CASP-like protein 1D1.